A 210-amino-acid chain; its full sequence is Small ribosomal subunit protein uS3 (210 aa).

In terms of domain architecture, KH type-2 spans 17-86 (IDEFLEKELR…NPQIDVQEIK (70 aa)).

The protein belongs to the universal ribosomal protein uS3 family. In terms of assembly, part of the 30S ribosomal subunit.

Its function is as follows. Binds the lower part of the 30S subunit head. In Pyrococcus horikoshii (strain ATCC 700860 / DSM 12428 / JCM 9974 / NBRC 100139 / OT-3), this protein is Small ribosomal subunit protein uS3.